We begin with the raw amino-acid sequence, 740 residues long: Polyribonucleotide nucleotidyltransferase (740 aa).

2 residues coordinate Mg(2+): Asp492 and Asp498. The KH domain occupies 559 to 618 (PMVQTLEIQKEKIRDVIGLGGKVIKELCKTFDVEIDISENGEVKVWGNVGENVKKAVQSI). Positions 628–696 (GDIFDGEVVK…HKNRVKLTLR (69 aa)) constitute an S1 motif domain.

This sequence belongs to the polyribonucleotide nucleotidyltransferase family. Mg(2+) is required as a cofactor.

It is found in the cytoplasm. The enzyme catalyses RNA(n+1) + phosphate = RNA(n) + a ribonucleoside 5'-diphosphate. In terms of biological role, involved in mRNA degradation. Catalyzes the phosphorolysis of single-stranded polyribonucleotides processively in the 3'- to 5'-direction. The protein is Polyribonucleotide nucleotidyltransferase of Orientia tsutsugamushi (strain Boryong) (Rickettsia tsutsugamushi).